The primary structure comprises 481 residues: Trigger factor (481 aa).

The PPIase FKBP-type domain maps to 174–261; it reads GDIAVVGFKG…LKDLKTRELP (88 aa). The interval 430–481 is disordered; it reads ENSTVTEKAPEAESDAAKASKPAAAKKDASKAKTAKTSKAKTAKAESESAES. Basic and acidic residues predominate over residues 437-447; it reads KAPEAESDAAK. Positions 462–471 are enriched in basic residues; the sequence is KTAKTSKAKT. Residues 472–481 show a composition bias toward basic and acidic residues; sequence AKAESESAES.

It belongs to the FKBP-type PPIase family. Tig subfamily.

The protein localises to the cytoplasm. The catalysed reaction is [protein]-peptidylproline (omega=180) = [protein]-peptidylproline (omega=0). In terms of biological role, involved in protein export. Acts as a chaperone by maintaining the newly synthesized protein in an open conformation. Functions as a peptidyl-prolyl cis-trans isomerase. This Synechococcus sp. (strain WH7803) protein is Trigger factor.